Reading from the N-terminus, the 427-residue chain is Adenylosuccinate synthetase (427 aa).

GTP-binding positions include 12–18 and 40–42; these read GDEGKGK and GHT. Aspartate 13 (proton acceptor) is an active-site residue. The Mg(2+) site is built by aspartate 13 and glycine 40. Residues 13 to 16, 38 to 41, threonine 127, arginine 141, glutamine 222, threonine 237, and arginine 301 each bind IMP; these read DEGK and NAGH. The active-site Proton donor is histidine 41. 297–303 provides a ligand contact to substrate; it reads VVTKRPR. GTP contacts are provided by residues arginine 303, 329–331, and 411–413; these read SLD and AVG.

This sequence belongs to the adenylosuccinate synthetase family. In terms of assembly, homodimer. Mg(2+) is required as a cofactor.

It is found in the cytoplasm. It carries out the reaction IMP + L-aspartate + GTP = N(6)-(1,2-dicarboxyethyl)-AMP + GDP + phosphate + 2 H(+). Its pathway is purine metabolism; AMP biosynthesis via de novo pathway; AMP from IMP: step 1/2. Plays an important role in the de novo pathway of purine nucleotide biosynthesis. Catalyzes the first committed step in the biosynthesis of AMP from IMP. The chain is Adenylosuccinate synthetase from Leuconostoc mesenteroides subsp. mesenteroides (strain ATCC 8293 / DSM 20343 / BCRC 11652 / CCM 1803 / JCM 6124 / NCDO 523 / NBRC 100496 / NCIMB 8023 / NCTC 12954 / NRRL B-1118 / 37Y).